The following is a 436-amino-acid chain: Adenylosuccinate synthetase (436 aa).

GTP contacts are provided by residues 12-18 (GDEGKGK) and 40-42 (GHT). The active-site Proton acceptor is aspartate 13. Aspartate 13 and glycine 40 together coordinate Mg(2+). Residues 13-16 (DEGK), 38-41 (NAGH), threonine 130, arginine 144, glutamine 230, threonine 245, and arginine 309 each bind IMP. Histidine 41 serves as the catalytic Proton donor. 305 to 311 (TTTGRPR) is a binding site for substrate. GTP-binding positions include arginine 311, 337 to 339 (KLD), and 419 to 421 (SVG).

Belongs to the adenylosuccinate synthetase family. In terms of assembly, homodimer. Mg(2+) is required as a cofactor.

The protein resides in the cytoplasm. The catalysed reaction is IMP + L-aspartate + GTP = N(6)-(1,2-dicarboxyethyl)-AMP + GDP + phosphate + 2 H(+). It participates in purine metabolism; AMP biosynthesis via de novo pathway; AMP from IMP: step 1/2. Plays an important role in the de novo pathway of purine nucleotide biosynthesis. Catalyzes the first committed step in the biosynthesis of AMP from IMP. This chain is Adenylosuccinate synthetase, found in Myxococcus xanthus (strain DK1622).